A 156-amino-acid polypeptide reads, in one-letter code: 2-C-methyl-D-erythritol 2,4-cyclodiphosphate synthase (156 aa).

Residues Asp8 and His10 each contribute to the a divalent metal cation site. Residues 8 to 10 (DVH) and 34 to 35 (HS) each bind 4-CDP-2-C-methyl-D-erythritol 2-phosphate. His42 is a binding site for a divalent metal cation. Residues 56-58 (DIG), 61-65 (FPDTD), 100-106 (AQRPKMA), 132-135 (TTEE), and Phe139 each bind 4-CDP-2-C-methyl-D-erythritol 2-phosphate.

The protein belongs to the IspF family. Homotrimer. Requires a divalent metal cation as cofactor.

The catalysed reaction is 4-CDP-2-C-methyl-D-erythritol 2-phosphate = 2-C-methyl-D-erythritol 2,4-cyclic diphosphate + CMP. The protein operates within isoprenoid biosynthesis; isopentenyl diphosphate biosynthesis via DXP pathway; isopentenyl diphosphate from 1-deoxy-D-xylulose 5-phosphate: step 4/6. Its function is as follows. Involved in the biosynthesis of isopentenyl diphosphate (IPP) and dimethylallyl diphosphate (DMAPP), two major building blocks of isoprenoid compounds. Catalyzes the conversion of 4-diphosphocytidyl-2-C-methyl-D-erythritol 2-phosphate (CDP-ME2P) to 2-C-methyl-D-erythritol 2,4-cyclodiphosphate (ME-CPP) with a corresponding release of cytidine 5-monophosphate (CMP). This Clostridium perfringens (strain ATCC 13124 / DSM 756 / JCM 1290 / NCIMB 6125 / NCTC 8237 / Type A) protein is 2-C-methyl-D-erythritol 2,4-cyclodiphosphate synthase.